The primary structure comprises 187 residues: HTH-type transcriptional repressor Rv1474c (187 aa).

In terms of domain architecture, HTH tetR-type spans 10 to 70; the sequence is AARRRQILDG…ALAREDTERM (61 aa). Positions 33–52 form a DNA-binding region, H-T-H motif; sequence TVRRLEQAIGMSRGAIFHHF.

Homodimer.

Binding to DNA is abolished in the presence of high concentration of iron. Specifically binds to tetracycline, which leads to a conformational change in the structure of the protein and inhibits the DNA binding activity. Its function is as follows. Represses the expression of the aconitase gene acn and its own expression, in an iron-responsive manner. Binds to the inverted repeat element present in the upstream region of acn (Rv1475c)-Rv1474c operon. Preferentially binds to major groove of the DNA. The chain is HTH-type transcriptional repressor Rv1474c from Mycobacterium tuberculosis (strain ATCC 25618 / H37Rv).